A 179-amino-acid chain; its full sequence is MTDLVAVWDVALSDGVHKIEFEHGTTSGKRVVYVDGKEEIRREWMFKLVGKETFFVGAAKTKATINIDAISGFAYEYTLEIDGKSLKKYMENRSKTTSTWVLRLDGEDLRVVLEKDTMDVWCNGQKMETAGEFVDDGTETHFSVGNHGCYIKAVSSGKRKEGIIHTLIVDNREIPELTQ.

Thr-2 is modified (N-acetylthreonine).

It belongs to the FAIM1 family. In terms of tissue distribution, widely expressed, with the highest levels in brain, thymus, kidney, and spleen.

It localises to the cytoplasm. In terms of biological role, plays a role as an inducible effector molecule that mediates Fas resistance produced by surface Ig engagement in B cells. The sequence is that of Fas apoptotic inhibitory molecule 1 (Faim) from Mus musculus (Mouse).